The chain runs to 300 residues: 4-hydroxy-tetrahydrodipicolinate synthase (300 aa).

Thr56 is a binding site for pyruvate. Catalysis depends on Tyr145, which acts as the Proton donor/acceptor. Lys173 acts as the Schiff-base intermediate with substrate in catalysis. Residue Val215 coordinates pyruvate.

It belongs to the DapA family. Homotetramer; dimer of dimers.

It localises to the cytoplasm. It catalyses the reaction L-aspartate 4-semialdehyde + pyruvate = (2S,4S)-4-hydroxy-2,3,4,5-tetrahydrodipicolinate + H2O + H(+). The protein operates within amino-acid biosynthesis; L-lysine biosynthesis via DAP pathway; (S)-tetrahydrodipicolinate from L-aspartate: step 3/4. Catalyzes the condensation of (S)-aspartate-beta-semialdehyde [(S)-ASA] and pyruvate to 4-hydroxy-tetrahydrodipicolinate (HTPA). The polypeptide is 4-hydroxy-tetrahydrodipicolinate synthase (Prochlorococcus marinus (strain AS9601)).